Here is a 528-residue protein sequence, read N- to C-terminus: Dihydromonacolin L monooxygenase LovA (528 aa).

The Cytoplasmic segment spans residues 1 to 23; sequence MTVDALTQPHHLLSLAWNDTQQH. Residues 24-44 traverse the membrane as a helical; Signal-anchor for type II membrane protein segment; that stretch reads GSWFAPLVTTSAGLLCLLLYL. Residues 45–528 are Lumenal-facing; that stretch reads CSSGRRSDLP…DEDIRLPGSL (484 aa). Cys-465 contacts heme.

It belongs to the cytochrome P450 family. Heme serves as cofactor.

It is found in the membrane. It localises to the endoplasmic reticulum membrane. The catalysed reaction is dihydromonacolin L carboxylate + reduced [NADPH--hemoprotein reductase] + O2 = monacolin L carboxylate + oxidized [NADPH--hemoprotein reductase] + 2 H2O + H(+). It carries out the reaction monacolin L carboxylate + reduced [NADPH--hemoprotein reductase] + O2 = monacolin J carboxylate + oxidized [NADPH--hemoprotein reductase] + H2O + H(+). The protein operates within polyketide biosynthesis; lovastatin biosynthesis. Dihydromonacolin L monooxygenase; part of the gene cluster that mediates the biosynthesis of lovastatin (also known as mevinolin, mevacor or monacolin K), a hypolipidemic inhibitor of (3S)-hydroxymethylglutaryl-coenzyme A (HMG-CoA) reductase (HMGR). The first step in the biosynthesis of lovastatin is the production of dihydromonacolin L acid by the lovastatin nonaketide synthase lovB and the trans-acting enoyl reductase lovC via condensation of one acetyl-CoA unit and 8 malonyl-CoA units. Dihydromonacolin L acid is released from lovB by the thioesterase lovG. Next, dihydromonacolin L acid is oxidized by the dihydromonacolin L monooxygenase lovA twice to form monacolin J acid. The 2-methylbutyrate moiety of lovastatin is synthesized by the lovastatin diketide synthase lovF via condensation of one acetyl-CoA unit and one malonyl-CoA unit. Finally, the covalent attachment of this moiety to monacolin J acid is catalyzed by the transesterase lovD to yield lovastatin. LovD has broad substrate specificity and can also convert monacolin J to simvastatin using alpha-dimethylbutanoyl-S-methyl-3-mercaptopropionate (DMB-S-MMP) as the thioester acyl donor, and can also catalyze the reverse reaction and function as hydrolase in vitro. LovD has much higher activity with LovF-bound 2-methylbutanoate than with free diketide substrates. In Aspergillus terreus, this protein is Dihydromonacolin L monooxygenase LovA.